The following is a 198-amino-acid chain: Cytochrome c oxidase assembly protein CtaG (198 aa).

Residues 1-12 lie on the Cytoplasmic side of the membrane; it reads MADNGQADRKER. A helical; Signal-anchor for type II membrane protein transmembrane segment spans residues 13–35; sequence SNGVIVGTCLAFVAGMIGMAYAA. Over 36–198 the chain is Periplasmic; the sequence is VPLYDMFCRV…QVKAKAENKL (163 aa).

The protein belongs to the COX11/CtaG family.

The protein localises to the cell inner membrane. Functionally, exerts its effect at some terminal stage of cytochrome c oxidase synthesis, probably by being involved in the insertion of the copper B into subunit I. This is Cytochrome c oxidase assembly protein CtaG from Rhizobium meliloti (strain 1021) (Ensifer meliloti).